Consider the following 413-residue polypeptide: Histidine--tRNA ligase (413 aa).

This sequence belongs to the class-II aminoacyl-tRNA synthetase family. As to quaternary structure, homodimer.

It is found in the cytoplasm. It carries out the reaction tRNA(His) + L-histidine + ATP = L-histidyl-tRNA(His) + AMP + diphosphate + H(+). The polypeptide is Histidine--tRNA ligase (Ehrlichia chaffeensis (strain ATCC CRL-10679 / Arkansas)).